A 154-amino-acid polypeptide reads, in one-letter code: AP-1 complex subunit sigma-2 (154 aa).

Belongs to the adaptor complexes small subunit family. In terms of assembly, adaptor protein complex 1 (AP-1) is a heterotetramer composed of two large adaptins (gamma-type subunit and beta-type subunit), a medium adaptin (mu-type subunit) and a small adaptin (sigma-type subunit).

The protein localises to the golgi apparatus. It localises to the trans-Golgi network. Its subcellular location is the cytoplasmic vesicle. The protein resides in the clathrin-coated vesicle membrane. Functionally, subunit of clathrin-associated adaptor protein complex 1 that plays a role in protein sorting in the trans-Golgi network (TGN) and endosomes. The AP complexes mediate the recruitment of clathrin to membranes and the recognition of sorting signals within the cytosolic tails of transmembrane cargo molecules. Also involved in early steps of phagocytosis and macropinocytosis. The chain is AP-1 complex subunit sigma-2 (ap1s2) from Dictyostelium discoideum (Social amoeba).